Consider the following 268-residue polypeptide: Forkhead box protein R1 (268 aa).

The tract at residues 91-126 is disordered; it reads EDSCSEASEVQQPLPPCRQKRKQRRSTVPLPLAPGR. The fork-head DNA-binding region spans 149-248; the sequence is RPPLHYFHLI…KEARTLASTQ (100 aa).

In terms of tissue distribution, expressed in adult germ cells (at protein level). Expressed in heart, liver, lung and embryonic brain.

Its subcellular location is the nucleus. The protein localises to the cytoplasm. It is found in the perinuclear region. Transcription factor which acts as both an activator and a repressor. Activates transcription of a number of genes including the heat shock chaperones HSPA1A and HSPA6 and the antioxidant NADPH-dependent reductase DHRS2 which are involved in protection against oxidative stress. Required for normal brain development. In Mus musculus (Mouse), this protein is Forkhead box protein R1 (Foxr1).